Reading from the N-terminus, the 1129-residue chain is MAPSQHPKSAAAPATTSDQMSTASSRPTNGTAHTSAETAYPSSMTDSKPTQSGPGSRASDEQDADEAYSNHSEQHMDHSNPDGHPSKPSGRKKKKKAKKGRAGSQTLGDESSTPLSTPSVSMSHPLPPPLPPHLGTRTILKSAKDRSIWNTSTQEERENIKTFWLELGEEERRQLVKVEKDAVLKKMKEQQKHSCSCTVCGRKRTAIEEELEVLYDAYYEELEQYANNNQGSFEKGSPIVPPPRLYQPPLRSPGQHTRTQGQFHPSRGRIHEITEDEEDLEEDYDDEEEDDDEPYSDDEFEDEETRAARADFFAFGNSLTVKDGILTVADDLLKNDGKHFIDMMEQLAERRMQREEDTQYNIAAAHQSLHSGHNHPPYDEEDYDDEEDEEYDSQEEDDYDEDEMDTMTEEQRMEEGRRMFQIFAARMFEQRVLTAYREKVAEQRQQKLIEELMEEQTRTEQKNAKKAREAEKRKEKKRLQKQAKEEEKARREAEKAAEEAAAKAEQEKKLEEQRRKREEQRKKREAERKAQEEERARKEAEKQRRLREERERQAEAERKHREQKEQEKKKREEARRKEREERELREKKAKEERERKAQEDQKKANQETPETKRTSHLGPVPIPANLQPQGSSSHLQSPHLQSASPAVPKAPTPAKARQPSQQGSHGSSPRSQQASTEPFHTSISPRSMAPSQSSGASSVASKQGYGQQPMLHHPQPSTPLSPLGSVNRSLPPGFASAGLPSNPPGLPGMVPRPPIGHELPTYPPHSGPLMNQLRGFPAPNGIPIPPGINGTRPLAPGRGFPLEAAPGLPFHTQQPIAGAFASHQGGMSHGHSRQPSGSFERSPLEPHAQPFPISRPSPIKRPPSTQQEQSDANRATQRDVDNLSAQLGSSALLDDTDIPFTSNLSQSLPGATAPGSLPGPTRASFGAPSLFPDPLASKPGGFPMGPGVGANTWGTQIPFVSSAFPGAPAWGTAHGSGWSNNAFGSGGHHRAHTSRPVAIRLLVIQACKQLDTMSSSKAGSGYHDVKIVLQQVEQLRPSNEPSIPLKEMLDICDTEGNTQNGGGSFSIKKDETGEFVKFEPDNNSAASGHRGSIVPGEIGSPVPSSSMPAFGGIGNTPSVLRQFSSPTGF.

Disordered regions lie at residues 1 to 136, 229 to 307, 361 to 413, 453 to 879, and 903 to 937; these read MAPS…HLGT, NQGS…ETRA, NIAA…EQRM, MEEQ…TQRD, and NLSQ…PLAS. Residues 14–54 are compositionally biased toward polar residues; that stretch reads ATTSDQMSTASSRPTNGTAHTSAETAYPSSMTDSKPTQSGP. A compositionally biased stretch (basic and acidic residues) spans 72-85; sequence SEQHMDHSNPDGHP. Residues 89–101 are compositionally biased toward basic residues; sequence SGRKKKKKAKKGR. Composition is skewed to polar residues over residues 103–122 and 254–263; these read GSQT…SVSM and GQHTRTQGQF. Acidic residues-rich tracts occupy residues 274-304 and 379-408; these read TEDE…EDEE and DEED…DTMT. Residues 441–608 are a coiled coil; it reads AEQRQQKLIE…EDQKKANQET (168 aa). Basic and acidic residues-rich tracts occupy residues 453 to 473 and 482 to 613; these read MEEQ…AEKR and QAKE…ETKR. Over residues 626–673 the composition is skewed to low complexity; it reads LQPQGSSSHLQSPHLQSASPAVPKAPTPAKARQPSQQGSHGSSPRSQQ. The segment covering 674 to 685 has biased composition (polar residues); the sequence is ASTEPFHTSISP. A compositionally biased stretch (low complexity) spans 687–701; the sequence is SMAPSQSSGASSVAS. Residues 718–728 are compositionally biased toward polar residues; it reads TPLSPLGSVNR. Positions 741–754 are enriched in pro residues; sequence SNPPGLPGMVPRPP. A compositionally biased stretch (polar residues) spans 865–875; that stretch reads TQQEQSDANRA.

The protein belongs to the NST1 family.

It is found in the cytoplasm. In terms of biological role, may act as a negative regulator of salt tolerance. The chain is Stress response protein nst1 (nst1) from Aspergillus terreus (strain NIH 2624 / FGSC A1156).